Reading from the N-terminus, the 177-residue chain is Ubiquinol-cytochrome c reductase iron-sulfur subunit (177 aa).

Residues 18-38 (MVLTASSVAAVGAVCTLWPLV) traverse the membrane as a helical segment. Residues 88–175 (ARAVKMSELI…YTFISDKKIR (88 aa)) enclose the Rieske domain. Residues cysteine 120, histidine 122, cysteine 139, and histidine 142 each coordinate [2Fe-2S] cluster. An intrachain disulfide couples cysteine 125 to cysteine 141.

This sequence belongs to the Rieske iron-sulfur protein family. In terms of assembly, the main subunits of complex b-c1 are: cytochrome b, cytochrome c1 and the Rieske protein. [2Fe-2S] cluster serves as cofactor.

Its subcellular location is the cell membrane. The enzyme catalyses a quinol + 2 Fe(III)-[cytochrome c](out) = a quinone + 2 Fe(II)-[cytochrome c](out) + 2 H(+)(out). Component of the ubiquinol-cytochrome c reductase complex (complex III or cytochrome b-c1 complex), which is a respiratory chain that generates an electrochemical potential coupled to ATP synthesis. The protein is Ubiquinol-cytochrome c reductase iron-sulfur subunit (petA) of Rickettsia felis (strain ATCC VR-1525 / URRWXCal2) (Rickettsia azadi).